A 319-amino-acid polypeptide reads, in one-letter code: Acetyl-coenzyme A carboxylase carboxyl transferase subunit alpha (319 aa).

The region spanning 35–296 (DLDKEIEQLE…KDMLVKQLEE (262 aa)) is the CoA carboxyltransferase C-terminal domain.

Belongs to the AccA family. Acetyl-CoA carboxylase is a heterohexamer composed of biotin carboxyl carrier protein (AccB), biotin carboxylase (AccC) and two subunits each of ACCase subunit alpha (AccA) and ACCase subunit beta (AccD).

Its subcellular location is the cytoplasm. It carries out the reaction N(6)-carboxybiotinyl-L-lysyl-[protein] + acetyl-CoA = N(6)-biotinyl-L-lysyl-[protein] + malonyl-CoA. The protein operates within lipid metabolism; malonyl-CoA biosynthesis; malonyl-CoA from acetyl-CoA: step 1/1. Functionally, component of the acetyl coenzyme A carboxylase (ACC) complex. First, biotin carboxylase catalyzes the carboxylation of biotin on its carrier protein (BCCP) and then the CO(2) group is transferred by the carboxyltransferase to acetyl-CoA to form malonyl-CoA. The chain is Acetyl-coenzyme A carboxylase carboxyl transferase subunit alpha from Vibrio atlanticus (strain LGP32) (Vibrio splendidus (strain Mel32)).